Here is a 750-residue protein sequence, read N- to C-terminus: Photosystem I P700 chlorophyll a apoprotein A1 (750 aa).

The next 8 helical transmembrane spans lie at 70-93 (VFSA…FHGA), 156-179 (LYST…FHYH), 195-219 (LNHH…HVSL), 291-309 (TAHH…GHMY), 346-369 (WHAQ…HHMY), 385-411 (LSLF…IFMV), 433-455 (AIIS…LYIH), and 531-549 (FLVH…LILL). Residues C573 and C582 each coordinate [4Fe-4S] cluster. 2 helical membrane passes run 589–610 (HVFL…HFSW) and 664–686 (LSAY…MFLF). H675 contributes to the chlorophyll a' binding site. M683 and Y691 together coordinate chlorophyll a. W692 is a binding site for phylloquinone. The chain crosses the membrane as a helical span at residues 724 to 744 (AVGVAHYLLGGIATTWAFFLA).

This sequence belongs to the PsaA/PsaB family. In terms of assembly, the PsaA/B heterodimer binds the P700 chlorophyll special pair and subsequent electron acceptors. PSI consists of a core antenna complex that captures photons, and an electron transfer chain that converts photonic excitation into a charge separation. The eukaryotic PSI reaction center is composed of at least 11 subunits. It depends on P700 is a chlorophyll a/chlorophyll a' dimer, A0 is one or more chlorophyll a, A1 is one or both phylloquinones and FX is a shared 4Fe-4S iron-sulfur center. as a cofactor.

The protein localises to the plastid. Its subcellular location is the chloroplast thylakoid membrane. The enzyme catalyses reduced [plastocyanin] + hnu + oxidized [2Fe-2S]-[ferredoxin] = oxidized [plastocyanin] + reduced [2Fe-2S]-[ferredoxin]. PsaA and PsaB bind P700, the primary electron donor of photosystem I (PSI), as well as the electron acceptors A0, A1 and FX. PSI is a plastocyanin-ferredoxin oxidoreductase, converting photonic excitation into a charge separation, which transfers an electron from the donor P700 chlorophyll pair to the spectroscopically characterized acceptors A0, A1, FX, FA and FB in turn. Oxidized P700 is reduced on the lumenal side of the thylakoid membrane by plastocyanin. The protein is Photosystem I P700 chlorophyll a apoprotein A1 of Marchantia polymorpha (Common liverwort).